The sequence spans 520 residues: Cholesterol side-chain cleavage enzyme, mitochondrial (520 aa).

The transit peptide at Met1–Gly39 directs the protein to the mitochondrion. Residue Cys461 coordinates heme.

The protein belongs to the cytochrome P450 family. Interacts with FDX1/adrenodoxin. Heme serves as cofactor. In terms of tissue distribution, detected in adrenal cortex and corpus luteum (at protein level).

The protein localises to the mitochondrion inner membrane. It carries out the reaction 6 reduced [adrenodoxin] + cholesterol + 3 O2 + 6 H(+) = 4-methylpentanal + pregnenolone + 6 oxidized [adrenodoxin] + 4 H2O. It catalyses the reaction 2 reduced [adrenodoxin] + cholesterol + O2 + 2 H(+) = (22R)-hydroxycholesterol + 2 oxidized [adrenodoxin] + H2O. The catalysed reaction is (22R)-hydroxycholesterol + 2 reduced [adrenodoxin] + O2 + 2 H(+) = (20R,22R)-20,22-dihydroxycholesterol + 2 oxidized [adrenodoxin] + H2O. The enzyme catalyses (20R,22R)-20,22-dihydroxycholesterol + 2 reduced [adrenodoxin] + O2 + 2 H(+) = 4-methylpentanal + pregnenolone + 2 oxidized [adrenodoxin] + 2 H2O. Its pathway is lipid metabolism; C21-steroid hormone metabolism. It functions in the pathway steroid metabolism; cholesterol metabolism. Its function is as follows. A cytochrome P450 monooxygenase that catalyzes the side-chain hydroxylation and cleavage of cholesterol to pregnenolone, the precursor of most steroid hormones. Catalyzes three sequential oxidation reactions of cholesterol, namely the hydroxylation at C22 followed with the hydroxylation at C20 to yield 20R,22R-hydroxycholesterol that is further cleaved between C20 and C22 to yield the C21-steroid pregnenolone and 4-methylpentanal. Mechanistically, uses molecular oxygen inserting one oxygen atom into a substrate and reducing the second into a water molecule. Two electrons are provided by NADPH via a two-protein mitochondrial transfer system comprising flavoprotein FDXR (adrenodoxin/ferredoxin reductase) and nonheme iron-sulfur protein FDX1 or FDX2 (adrenodoxin/ferredoxin). This chain is Cholesterol side-chain cleavage enzyme, mitochondrial (CYP11A1), found in Bos taurus (Bovine).